A 947-amino-acid polypeptide reads, in one-letter code: Pyruvate, phosphate dikinase 1, chloroplastic (947 aa).

The N-terminal 71 residues, 1–71 (MPSVSRAVCV…PLRAVAAPIP (71 aa)), are a transit peptide targeting the chloroplast. Positions 39-60 (RHGKPEVAIRSGSGGSARGGHC) are disordered. T527 carries the phosphothreonine; by PDRP1 modification. The Tele-phosphohistidine intermediate role is filled by H529. R635, R692, E821, G842, T843, N844, and D845 together coordinate substrate. A Mg(2+)-binding site is contributed by E821. A Mg(2+)-binding site is contributed by D845. C907 serves as the catalytic Proton donor.

Belongs to the PEP-utilizing enzyme family. As to quaternary structure, homotetramer. The cofactor is Mg(2+). In terms of processing, phosphorylation of Thr-527 in the dark inactivates the enzyme. Dephosphorylation upon light stimulation reactivates the enzyme. Phosphorylation increases during the first 20 days post-pollination and then remains constant through the 40-day mature seed stage. Reactivation by dephosphorylation during germination is negligible. Isoform 1 is only expressed in green leaves. Isoform 2 is found in roots, stems, rachis branches, leaf sheaths, green leaves and spikelets. The non-phosphorylated PPDK in mature seeds is endosperm-localized.

Its subcellular location is the plastid. The protein localises to the chloroplast. It localises to the cytoplasm. The catalysed reaction is pyruvate + phosphate + ATP = phosphoenolpyruvate + AMP + diphosphate + H(+). Its activity is regulated as follows. Activated by light-induced dephosphorylation. Inhibited by dark-induced phosphorylation. Both reactions are catalyzed by PDRP1. In terms of biological role, formation of phosphoenolpyruvate. The cytoplasmic isoform supports the biosynthetic processes in the nascent endosperm and provides an efficient mechanism for glycolytic ATP synthesis in oxygen depleted tissues. May be involved in regulating the flux of carbon into starch and fatty acids of seeds and in the remobilization of nitrogen reserves in senescing leaves. In Oryza sativa subsp. japonica (Rice), this protein is Pyruvate, phosphate dikinase 1, chloroplastic (PPDK1).